The following is a 125-amino-acid chain: Thioredoxin H-type (125 aa).

In terms of domain architecture, Thioredoxin spans alanine 2 to alanine 112. Active-site nucleophile residues include cysteine 38 and cysteine 41. Residues cysteine 38 and cysteine 41 are joined by a disulfide bond.

The protein belongs to the thioredoxin family. Plant H-type subfamily.

It localises to the cytoplasm. Its function is as follows. Participates in various redox reactions through the reversible oxidation of the active center dithiol to a disulfide. The H form is known to activate a number of cytosolic enzymes. This Picea mariana (Black spruce) protein is Thioredoxin H-type (SB09).